A 191-amino-acid polypeptide reads, in one-letter code: Thioredoxin F-type, chloroplastic (191 aa).

Positions 68–190 (KASLETAVGA…LVAAIEAARS (123 aa)) constitute a Thioredoxin domain. Catalysis depends on nucleophile residues Cys-115 and Cys-118. Cys-115 and Cys-118 are oxidised to a cystine.

This sequence belongs to the thioredoxin family. Plant F-type subfamily. As to quaternary structure, forms a complex with heterodimeric ferredoxin-thioredoxin reductase (FTR) and ferredoxin.

The protein resides in the plastid. Its subcellular location is the chloroplast. Functionally, participates in various redox reactions through the reversible oxidation of the active center dithiol to a disulfide. The F form is known to activate a number of enzymes of the photosynthetic carbon cycle. The protein is Thioredoxin F-type, chloroplastic of Mesembryanthemum crystallinum (Common ice plant).